The primary structure comprises 122 residues: Aspartate 1-decarboxylase (122 aa).

Catalysis depends on Ser-25, which acts as the Schiff-base intermediate with substrate; via pyruvic acid. Pyruvic acid (Ser) is present on Ser-25. Thr-57 is a substrate binding site. Catalysis depends on Tyr-58, which acts as the Proton donor. 73 to 75 provides a ligand contact to substrate; the sequence is GAA.

It belongs to the PanD family. In terms of assembly, heterooctamer of four alpha and four beta subunits. The cofactor is pyruvate. In terms of processing, is synthesized initially as an inactive proenzyme, which is activated by self-cleavage at a specific serine bond to produce a beta-subunit with a hydroxyl group at its C-terminus and an alpha-subunit with a pyruvoyl group at its N-terminus.

The protein localises to the cytoplasm. The catalysed reaction is L-aspartate + H(+) = beta-alanine + CO2. The protein operates within cofactor biosynthesis; (R)-pantothenate biosynthesis; beta-alanine from L-aspartate: step 1/1. Catalyzes the pyruvoyl-dependent decarboxylation of aspartate to produce beta-alanine. The protein is Aspartate 1-decarboxylase of Bordetella avium (strain 197N).